We begin with the raw amino-acid sequence, 664 residues long: Macoilin (664 aa).

4 helical membrane passes run 28–48 (TFLYLKFLVVWALVLLADFVL), 75–95 (AFSVFFVCVAFTSNIICLLFI), 120–140 (VCLPTVSLWILFVYIEAAIRF), and 154–174 (FAAHCIGYPVVTLGFGFKSYV). The span at 252 to 265 (YREKGKEKDKDAKK) shows a compositional bias: basic and acidic residues. Residues 252-274 (YREKGKEKDKDAKKHNLGINNNN) form a disordered region. Ser-305 carries the post-translational modification Phosphoserine. Over residues 320–348 (KNYKNASGVVNSSPRSHSATNGSIPSSSS) the composition is skewed to polar residues. A disordered region spans residues 320–375 (KNYKNASGVVNSSPRSHSATNGSIPSSSSKNEKKQRCTSKGPSAHKDLMENCIPNN). Asn-324 carries N-linked (GlcNAc...) asparagine glycosylation. Ser-332 bears the Phosphoserine mark. N-linked (GlcNAc...) asparagine glycosylation is found at Asn-340 and Asn-452. The tract at residues 630 to 664 (TSPLSPVSPHYSSKFVETSPSGLDPNASVYQPLKK) is disordered. Phosphoserine occurs at positions 631 and 634. Asn-655 carries N-linked (GlcNAc...) asparagine glycosylation.

It belongs to the macoilin family.

The protein localises to the rough endoplasmic reticulum membrane. Its subcellular location is the nucleus membrane. Functionally, plays a role in the regulation of neuronal activity. In Rattus norvegicus (Rat), this protein is Macoilin.